We begin with the raw amino-acid sequence, 105 residues long: Met repressor (105 aa).

It belongs to the MetJ family. Homodimer.

The protein resides in the cytoplasm. Its function is as follows. This regulatory protein, when combined with SAM (S-adenosylmethionine) represses the expression of the methionine regulon and of enzymes involved in SAM synthesis. The polypeptide is Met repressor (Shigella boydii serotype 18 (strain CDC 3083-94 / BS512)).